Reading from the N-terminus, the 517-residue chain is Crotonobetaine/carnitine--CoA ligase (517 aa).

It belongs to the ATP-dependent AMP-binding enzyme family.

The enzyme catalyses 4-(trimethylamino)butanoate + ATP + CoA = 4-(trimethylamino)butanoyl-CoA + AMP + diphosphate. It carries out the reaction crotonobetaine + ATP + CoA = crotonobetainyl-CoA + AMP + diphosphate. It catalyses the reaction (R)-carnitine + ATP + CoA = (R)-carnitinyl-CoA + AMP + diphosphate. It functions in the pathway amine and polyamine metabolism; carnitine metabolism. In terms of biological role, catalyzes the transfer of CoA to carnitine, generating the initial carnitinyl-CoA needed for the CaiB reaction cycle. Also has activity toward crotonobetaine and gamma-butyrobetaine. The sequence is that of Crotonobetaine/carnitine--CoA ligase from Shigella sonnei (strain Ss046).